The chain runs to 242 residues: Fibrinolytic enzyme, isozyme C (242 aa).

The Peptidase S1 domain occupies Val1–Arg242. Residues Cys29 and Cys45 are joined by a disulfide bond. Residues His44 and Asp93 each act as charge relay system in the active site. Cystine bridges form between Cys127-Cys197, Cys158-Cys176, and Cys187-Cys219. Residue Ser191 is the Charge relay system of the active site.

The protein belongs to the peptidase S1 family.

This is Fibrinolytic enzyme, isozyme C from Lumbricus rubellus (Humus earthworm).